The chain runs to 416 residues: Serine hydroxymethyltransferase (416 aa).

Residues Leu118 and 122-124 (GHL) contribute to the (6S)-5,6,7,8-tetrahydrofolate site. N6-(pyridoxal phosphate)lysine is present on Lys226. (6S)-5,6,7,8-tetrahydrofolate contacts are provided by residues Glu242 and 350 to 352 (SPF).

The protein belongs to the SHMT family. In terms of assembly, homodimer. Requires pyridoxal 5'-phosphate as cofactor.

The protein localises to the cytoplasm. The enzyme catalyses (6R)-5,10-methylene-5,6,7,8-tetrahydrofolate + glycine + H2O = (6S)-5,6,7,8-tetrahydrofolate + L-serine. Its pathway is one-carbon metabolism; tetrahydrofolate interconversion. It participates in amino-acid biosynthesis; glycine biosynthesis; glycine from L-serine: step 1/1. In terms of biological role, catalyzes the reversible interconversion of serine and glycine with tetrahydrofolate (THF) serving as the one-carbon carrier. This reaction serves as the major source of one-carbon groups required for the biosynthesis of purines, thymidylate, methionine, and other important biomolecules. Also exhibits THF-independent aldolase activity toward beta-hydroxyamino acids, producing glycine and aldehydes, via a retro-aldol mechanism. The sequence is that of Serine hydroxymethyltransferase from Helicobacter pylori (strain G27).